A 356-amino-acid polypeptide reads, in one-letter code: Protein-glutamate methylesterase/protein-glutamine glutaminase 2 (356 aa).

The Response regulatory domain occupies 4–121 (RALVVDDSAL…SQSMPEMAEE (118 aa)). A 4-aspartylphosphate modification is found at D55. The CheB-type methylesterase domain occupies 161–356 (KAAPRNILAI…MAEEIIRIIG (196 aa)). Active-site residues include S173, H200, and D300.

It belongs to the CheB family. Phosphorylated by CheA. Phosphorylation of the N-terminal regulatory domain activates the methylesterase activity.

Its subcellular location is the cytoplasm. It carries out the reaction [protein]-L-glutamate 5-O-methyl ester + H2O = L-glutamyl-[protein] + methanol + H(+). The catalysed reaction is L-glutaminyl-[protein] + H2O = L-glutamyl-[protein] + NH4(+). In terms of biological role, involved in chemotaxis. Part of a chemotaxis signal transduction system that modulates chemotaxis in response to various stimuli. Catalyzes the demethylation of specific methylglutamate residues introduced into the chemoreceptors (methyl-accepting chemotaxis proteins or MCP) by CheR. Also mediates the irreversible deamidation of specific glutamine residues to glutamic acid. The sequence is that of Protein-glutamate methylesterase/protein-glutamine glutaminase 2 from Methanosarcina acetivorans (strain ATCC 35395 / DSM 2834 / JCM 12185 / C2A).